The chain runs to 59 residues: UPF0434 protein lpg1920 (59 aa).

This sequence belongs to the UPF0434 family.

The protein is UPF0434 protein lpg1920 of Legionella pneumophila subsp. pneumophila (strain Philadelphia 1 / ATCC 33152 / DSM 7513).